The following is a 238-amino-acid chain: Chloride intracellular channel exl-1 (238 aa).

It belongs to the chloride channel CLIC family. As to expression, expressed in the intestine, neurons and muscles.

The protein resides in the cytoplasm. The protein localises to the membrane. It localises to the lysosome membrane. Its subcellular location is the golgi apparatus membrane. Probable chloride channel. This chain is Chloride intracellular channel exl-1 (exl-1), found in Caenorhabditis elegans.